The following is a 197-amino-acid chain: Imidazoleglycerol-phosphate dehydratase (197 aa).

This sequence belongs to the imidazoleglycerol-phosphate dehydratase family.

The protein localises to the cytoplasm. It catalyses the reaction D-erythro-1-(imidazol-4-yl)glycerol 3-phosphate = 3-(imidazol-4-yl)-2-oxopropyl phosphate + H2O. The protein operates within amino-acid biosynthesis; L-histidine biosynthesis; L-histidine from 5-phospho-alpha-D-ribose 1-diphosphate: step 6/9. This is Imidazoleglycerol-phosphate dehydratase from Clostridium acetobutylicum (strain ATCC 824 / DSM 792 / JCM 1419 / IAM 19013 / LMG 5710 / NBRC 13948 / NRRL B-527 / VKM B-1787 / 2291 / W).